A 139-amino-acid polypeptide reads, in one-letter code: U6 snRNA-associated Sm-like protein LSm4 (139 aa).

Position 1 is an N-acetylmethionine (methionine 1). The Sm domain occupies 2-75 (LPLSLLKTAQ…IKYLRIPDEI (74 aa)). Lysine 80 participates in a covalent cross-link: Glycyl lysine isopeptide (Lys-Gly) (interchain with G-Cter in SUMO2). The tract at residues 87-139 (GRGRGGLQQQKQQKGRGMGGAGRGVFGGRGRGGIPGTGRGQPEKKPGRQAGKQ) is disordered. Residues 102 to 125 (RGMGGAGRGVFGGRGRGGIPGTGR) are compositionally biased toward gly residues.

It belongs to the snRNP Sm proteins family. Component of the precatalytic spliceosome (spliceosome B complex). Component of the U4/U6-U5 tri-snRNP complex, a building block of the precatalytic spliceosome (spliceosome B complex). The U4/U6-U5 tri-snRNP complex is composed of the U4, U6 and U5 snRNAs and at least PRPF3, PRPF4, PRPF6, PRPF8, PRPF31, SNRNP200, TXNL4A, SNRNP40, SNRPB, SNRPD1, SNRPD2, SNRPD3, SNRPE, SNRPF, SNRPG, DDX23, CD2BP2, PPIH, SNU13, EFTUD2, SART1 and USP39, plus LSM2, LSM3, LSM4, LSM5, LSM6, LSM7 and LSM8. LSM2, LSM3, LSM4, LSM5, LSM6, LSM7 and LSM8 form a heptameric, ring-shaped subcomplex (the LSM2-8 complex) that is part of the U4/U6-U5 tri-snRNP complex and the precatalytic spliceosome.

It localises to the nucleus. In terms of biological role, plays a role in pre-mRNA splicing as component of the U4/U6-U5 tri-snRNP complex that is involved in spliceosome assembly, and as component of the precatalytic spliceosome (spliceosome B complex). The heptameric LSM2-8 complex binds specifically to the 3'-terminal U-tract of U6 snRNA. This is U6 snRNA-associated Sm-like protein LSm4 (LSM4) from Bos taurus (Bovine).